The chain runs to 1156 residues: Pesticidal crystal protein Cry9Aa (1156 aa).

A propeptide spans Met-1–Lys-23 (removed in mature form).

It belongs to the delta endotoxin family.

Functionally, promotes colloidosmotic lysis by binding to the midgut epithelial cells of insects. This protein is toxic to Galleria mellonella. This is Pesticidal crystal protein Cry9Aa (cry9Aa) from Bacillus thuringiensis subsp. galleriae.